Reading from the N-terminus, the 803-residue chain is Exo-1,4-beta-xylosidase xlnD (803 aa).

An N-terminal signal peptide occupies residues 1 to 18; sequence MRSLISVAVLSALPTAFS. Asparagine 21, asparagine 44, asparagine 85, asparagine 122, asparagine 140, and asparagine 234 each carry an N-linked (GlcNAc...) asparagine glycan. The active site involves aspartate 307. 6 N-linked (GlcNAc...) asparagine glycosylation sites follow: asparagine 437, asparagine 474, asparagine 515, asparagine 611, asparagine 676, and asparagine 698.

It belongs to the glycosyl hydrolase 3 family.

The protein localises to the secreted. The catalysed reaction is Hydrolysis of (1-&gt;4)-beta-D-xylans, to remove successive D-xylose residues from the non-reducing termini.. The protein operates within glycan degradation; xylan degradation. Functionally, xylan 1,4-beta-xylosidase involved in the hydrolysis of xylan, a major structural heterogeneous polysaccharide found in plant biomass representing the second most abundant polysaccharide in the biosphere, after cellulose. The sequence is that of Exo-1,4-beta-xylosidase xlnD (xlnD) from Emericella nidulans (strain FGSC A4 / ATCC 38163 / CBS 112.46 / NRRL 194 / M139) (Aspergillus nidulans).